The following is a 395-amino-acid chain: Cytoplasmic tRNA 2-thiolation protein 1 (395 aa).

Residues 297–309 are compositionally biased toward basic residues; sequence TVAYKNKNKNKKK. The disordered stretch occupies residues 297-335; it reads TVAYKNKNKNKKKSNSEQEEQEKQEQEVNPDGSISLNRN.

Belongs to the TtcA family. CTU1/NCS6/ATPBD3 subfamily.

The protein resides in the cytoplasm. It participates in tRNA modification; 5-methoxycarbonylmethyl-2-thiouridine-tRNA biosynthesis. Plays a central role in 2-thiolation of mcm(5)S(2)U at tRNA wobble positions of tRNA(Lys), tRNA(Glu) and tRNA(Gln). Directly binds tRNAs and probably acts by catalyzing adenylation of tRNAs, an intermediate required for 2-thiolation. It is unclear whether it acts as a sulfurtransferase that transfers sulfur from thiocarboxylated URM1 onto the uridine of tRNAs at wobble position. Prior mcm(5) tRNA modification by the elongator complex is required for 2-thiolation. May also be involved in protein urmylation. This Candida albicans (strain SC5314 / ATCC MYA-2876) (Yeast) protein is Cytoplasmic tRNA 2-thiolation protein 1.